The sequence spans 156 residues: Ribonuclease pancreatic (156 aa).

An N-terminal signal peptide occupies residues 1–28; it reads MALEKSLALLPLLVLVLLVLGWVQPSLG. Substrate is bound by residues K35 and R38. H40 acts as the Proton acceptor in catalysis. Intrachain disulfides connect C54–C112, C68–C123, C86–C138, and C93–C100. N-linked (GlcNAc...) asparagine glycosylation occurs at N62. A substrate-binding site is contributed by 69–73; it reads KPVNT. N90 is a glycosylation site (N-linked (GlcNAc...) asparagine). Positions 94 and 113 each coordinate substrate. Residue H147 is the Proton donor of the active site.

It belongs to the pancreatic ribonuclease family. Monomer. Interacts with and forms tight 1:1 complexes with RNH1. Dimerization of two such complexes may occur. Interaction with RNH1 inhibits this protein.

It localises to the secreted. It catalyses the reaction an [RNA] containing cytidine + H2O = an [RNA]-3'-cytidine-3'-phosphate + a 5'-hydroxy-ribonucleotide-3'-[RNA].. The enzyme catalyses an [RNA] containing uridine + H2O = an [RNA]-3'-uridine-3'-phosphate + a 5'-hydroxy-ribonucleotide-3'-[RNA].. Its function is as follows. Endonuclease that catalyzes the cleavage of RNA on the 3' side of pyrimidine nucleotides. Acts on single-stranded and double-stranded RNA. The protein is Ribonuclease pancreatic (RNASE1) of Lagothrix lagotricha (Brown woolly monkey).